A 33-amino-acid chain; its full sequence is uncharacterized protein (33 aa).

This is an uncharacterized protein from Staphylococcus aureus (strain MW2).